Reading from the N-terminus, the 78-residue chain is Putative membrane protein insertion efficiency factor (78 aa).

Belongs to the UPF0161 family.

It localises to the cell membrane. In terms of biological role, could be involved in insertion of integral membrane proteins into the membrane. The polypeptide is Putative membrane protein insertion efficiency factor (Bacillus anthracis (strain A0248)).